Reading from the N-terminus, the 332-residue chain is 5-dehydro-2-deoxygluconokinase (332 aa).

This sequence belongs to the carbohydrate kinase PfkB family.

The catalysed reaction is 5-dehydro-2-deoxy-D-gluconate + ATP = 6-phospho-5-dehydro-2-deoxy-D-gluconate + ADP + H(+). It participates in polyol metabolism; myo-inositol degradation into acetyl-CoA; acetyl-CoA from myo-inositol: step 5/7. Functionally, catalyzes the phosphorylation of 5-dehydro-2-deoxy-D-gluconate (2-deoxy-5-keto-D-gluconate or DKG) to 6-phospho-5-dehydro-2-deoxy-D-gluconate (DKGP). The chain is 5-dehydro-2-deoxygluconokinase from Bacillus anthracis (strain A0248).